The chain runs to 233 residues: ATP synthase subunit a, chloroplastic (233 aa).

4 helical membrane-spanning segments follow: residues 82 to 102 (VPFI…GALI), 121 to 141 (INTT…AGIS), 177 to 199 (LFGN…PLIV), and 211 to 231 (SSIQ…EAIE).

Belongs to the ATPase A chain family. In terms of assembly, F-type ATPases have 2 components, CF(1) - the catalytic core - and CF(0) - the membrane proton channel. CF(1) has five subunits: alpha(3), beta(3), gamma(1), delta(1), epsilon(1). CF(0) has four main subunits: a, b, b' and c.

It localises to the plastid. Its subcellular location is the chloroplast thylakoid membrane. Functionally, key component of the proton channel; it plays a direct role in the translocation of protons across the membrane. In Galdieria sulphuraria (Red alga), this protein is ATP synthase subunit a, chloroplastic.